Consider the following 347-residue polypeptide: Ion-translocating oxidoreductase complex subunit D (347 aa).

The next 4 helical transmembrane spans lie at 15-35 (IMFL…YFFG), 36-56 (IGTL…EIII), 84-104 (IPPL…IVVA), and 114-134 (NIFN…PVYM). Residue Thr-182 is modified to FMN phosphoryl threonine. Transmembrane regions (helical) follow at residues 217 to 237 (CINI…IICW), 239 to 259 (IPIS…FYSK), 261 to 281 (LFMS…AFFI), 289 to 309 (ACNN…VWII), and 315 to 335 (YPDA…LVDY).

This sequence belongs to the NqrB/RnfD family. The complex is composed of six subunits: RnfA, RnfB, RnfC, RnfD, RnfE and RnfG. FMN serves as cofactor.

Its subcellular location is the cell inner membrane. In terms of biological role, part of a membrane-bound complex that couples electron transfer with translocation of ions across the membrane. The protein is Ion-translocating oxidoreductase complex subunit D of Buchnera aphidicola subsp. Acyrthosiphon pisum (strain 5A).